The primary structure comprises 66 residues: UPF0370 protein YpfN (66 aa).

The chain crosses the membrane as a helical span at residues 4–24 (LAKYWWILVLVFLVGVLLNVI). The interval 39–66 (KPELPPHRDFNDKWDDEEDWPKKDQPKK) is disordered. Positions 42–51 (LPPHRDFNDK) are enriched in basic and acidic residues.

It belongs to the UPF0370 family.

The protein resides in the cell membrane. This chain is UPF0370 protein YpfN, found in Salmonella paratyphi A (strain AKU_12601).